We begin with the raw amino-acid sequence, 403 residues long: Phosphopentomutase 2 (403 aa).

Residues Asp13, Asp298, His303, Asp339, His340, and His351 each contribute to the Mn(2+) site.

Belongs to the phosphopentomutase family. It depends on Mn(2+) as a cofactor.

It is found in the cytoplasm. The catalysed reaction is 2-deoxy-alpha-D-ribose 1-phosphate = 2-deoxy-D-ribose 5-phosphate. It catalyses the reaction alpha-D-ribose 1-phosphate = D-ribose 5-phosphate. Its pathway is carbohydrate degradation; 2-deoxy-D-ribose 1-phosphate degradation; D-glyceraldehyde 3-phosphate and acetaldehyde from 2-deoxy-alpha-D-ribose 1-phosphate: step 1/2. Isomerase that catalyzes the conversion of deoxy-ribose 1-phosphate (dRib-1-P) and ribose 1-phosphate (Rib-1-P) to deoxy-ribose 5-phosphate (dRib-5-P) and ribose 5-phosphate (Rib-5-P), respectively. The protein is Phosphopentomutase 2 of Streptococcus agalactiae serotype Ia (strain ATCC 27591 / A909 / CDC SS700).